The primary structure comprises 160 residues: Transcriptional repressor NrdR (160 aa).

The segment covering 1–11 has biased composition (polar residues); that stretch reads MRCPNCNSLDT. Residues 1-20 form a disordered region; it reads MRCPNCNSLDTQVKDSRPTE. Residues 3-34 fold into a zinc finger; sequence CPNCNSLDTQVKDSRPTEDSSVIRRRRVCIAC. The ATP-cone domain occupies 49-139; that stretch reads LTVIKRNGRR…VYRNFREAKD (91 aa).

The protein belongs to the NrdR family. Requires Zn(2+) as cofactor.

Functionally, negatively regulates transcription of bacterial ribonucleotide reductase nrd genes and operons by binding to NrdR-boxes. The polypeptide is Transcriptional repressor NrdR (Rhodopseudomonas palustris (strain BisB5)).